The following is a 48-amino-acid chain: Large ribosomal subunit protein bL33B (48 aa).

The protein belongs to the bacterial ribosomal protein bL33 family.

This chain is Large ribosomal subunit protein bL33B, found in Streptococcus thermophilus (strain CNRZ 1066).